We begin with the raw amino-acid sequence, 232 residues long: Ubiquinone biosynthesis O-methyltransferase (232 aa).

S-adenosyl-L-methionine contacts are provided by Arg36, Gly55, Asp76, and Leu120.

The protein belongs to the methyltransferase superfamily. UbiG/COQ3 family.

It catalyses the reaction a 3-demethylubiquinol + S-adenosyl-L-methionine = a ubiquinol + S-adenosyl-L-homocysteine + H(+). The enzyme catalyses a 3-(all-trans-polyprenyl)benzene-1,2-diol + S-adenosyl-L-methionine = a 2-methoxy-6-(all-trans-polyprenyl)phenol + S-adenosyl-L-homocysteine + H(+). It participates in cofactor biosynthesis; ubiquinone biosynthesis. In terms of biological role, O-methyltransferase that catalyzes the 2 O-methylation steps in the ubiquinone biosynthetic pathway. This chain is Ubiquinone biosynthesis O-methyltransferase, found in Pseudomonas putida (strain ATCC 700007 / DSM 6899 / JCM 31910 / BCRC 17059 / LMG 24140 / F1).